The sequence spans 63 residues: Small integral membrane protein 43 (63 aa).

Important for interaction with SLC2A1 and SLC2A3 stretches follow at residues leucine 7–isoleucine 29 and histidine 51–phenylalanine 57. The chain crosses the membrane as a helical span at residues leucine 9 to isoleucine 29.

As to quaternary structure, interacts with glucose transporters SLC2A1/GLUT1 and SLC2A3/GLUT3; the interactions may promote SLC2A1- and SLC2A3-mediated glucose transport to meet the energy needs of mesendoderm differentiation. Accumulates in the posterior primitive streak of mid-gastrulation embryos at 7.0 dpc. In the adult, highly abundant and enriched in the brain compared to other organs.

The protein resides in the cell membrane. Functionally, required for mesendoderm differentiation. Interacts with glucose transporters and promotes glucose uptake. Probably augments the glucose uptake capacity of glucose transporter proteins to meet the energy needs of mesendoderm differentiation. The sequence is that of Small integral membrane protein 43 from Mus musculus (Mouse).